The following is a 338-amino-acid chain: Solute carrier family 35 member G3 (338 aa).

The disordered stretch occupies residues 1–24 (MAGSHPYFNQPDSTHPSPPSAPPS). The next 9 helical transmembrane spans lie at 37–57 (TSGLLVALLGGGLPAGFVGPL), 67–87 (LPSLELLIWRCLFHLPIALLL), 105–125 (FFCALLNILSIGCAYSAVQVV), 160–180 (CGLLGCILGLIIIVGPGLWTL), 190–210 (ALGYAEAFLGGRALSLGLLVY), 221–241 (TVAFLSGLVGLLGSVPGLFVL), 250–270 (LLSWSCVGAVGILALVSFTCV), 281–301 (LVCAVLHSEVVVALILQYYML), and 305–325 (VAPSDIMGAGVALGSIAIITA). The region spanning 49 to 174 (LPAGFVGPLS…CILGLIIIVG (126 aa)) is the EamA 1 domain. Residues 272 to 325 (YAVTKAHPALVCAVLHSEVVVALILQYYMLHETVAPSDIMGAGVALGSIAIITA) form the EamA 2 domain.

It belongs to the SLC35G solute transporter family.

The protein resides in the membrane. The sequence is that of Solute carrier family 35 member G3 (SLC35G3) from Pan paniscus (Pygmy chimpanzee).